Reading from the N-terminus, the 353-residue chain is Ribosomal RNA small subunit methyltransferase H (353 aa).

Residues 39 to 41, Asp-58, Phe-90, Asp-108, and Gln-115 contribute to the S-adenosyl-L-methionine site; that span reads AGH. The segment at 334–353 is disordered; sequence SEDGVRGAHGHRRRTQARRG. Basic residues predominate over residues 341–353; the sequence is AHGHRRRTQARRG.

This sequence belongs to the methyltransferase superfamily. RsmH family.

Its subcellular location is the cytoplasm. The catalysed reaction is cytidine(1402) in 16S rRNA + S-adenosyl-L-methionine = N(4)-methylcytidine(1402) in 16S rRNA + S-adenosyl-L-homocysteine + H(+). In terms of biological role, specifically methylates the N4 position of cytidine in position 1402 (C1402) of 16S rRNA. This Bifidobacterium animalis subsp. lactis (strain AD011) protein is Ribosomal RNA small subunit methyltransferase H.